The primary structure comprises 246 residues: Probable 2-phosphosulfolactate phosphatase (246 aa).

Belongs to the ComB family. Mg(2+) is required as a cofactor.

The catalysed reaction is (2R)-O-phospho-3-sulfolactate + H2O = (2R)-3-sulfolactate + phosphate. In Synechococcus sp. (strain WH7803), this protein is Probable 2-phosphosulfolactate phosphatase.